Here is a 155-residue protein sequence, read N- to C-terminus: Small ribosomal subunit protein uS7cz/uS7cy (155 aa).

The protein belongs to the universal ribosomal protein uS7 family. In terms of assembly, part of the 30S ribosomal subunit.

It is found in the plastid. The protein resides in the chloroplast. Functionally, one of the primary rRNA binding proteins, it binds directly to 16S rRNA where it nucleates assembly of the head domain of the 30S subunit. This is Small ribosomal subunit protein uS7cz/uS7cy (rps7-A) from Crucihimalaya wallichii (Rock-cress).